We begin with the raw amino-acid sequence, 187 residues long: Meiotically up-regulated gene 155 protein (187 aa).

The interval methionine 1–aspartate 24 is disordered. The next 2 helical transmembrane spans lie at isoleucine 83–histidine 105 and valine 163–phenylalanine 183.

It localises to the cytoplasm. The protein resides in the nucleus membrane. Its function is as follows. Has a role in meiosis. This is Meiotically up-regulated gene 155 protein (mug155) from Schizosaccharomyces pombe (strain 972 / ATCC 24843) (Fission yeast).